The primary structure comprises 550 residues: Dihydroxy-acid dehydratase (550 aa).

Residue aspartate 78 participates in Mg(2+) binding. Position 119 (cysteine 119) interacts with [2Fe-2S] cluster. 2 residues coordinate Mg(2+): aspartate 120 and lysine 121. Lysine 121 bears the N6-carboxylysine mark. Position 191 (cysteine 191) interacts with [2Fe-2S] cluster. Glutamate 440 serves as a coordination point for Mg(2+). The active-site Proton acceptor is serine 466.

Belongs to the IlvD/Edd family. As to quaternary structure, homodimer. [2Fe-2S] cluster is required as a cofactor. It depends on Mg(2+) as a cofactor.

The catalysed reaction is (2R)-2,3-dihydroxy-3-methylbutanoate = 3-methyl-2-oxobutanoate + H2O. The enzyme catalyses (2R,3R)-2,3-dihydroxy-3-methylpentanoate = (S)-3-methyl-2-oxopentanoate + H2O. It participates in amino-acid biosynthesis; L-isoleucine biosynthesis; L-isoleucine from 2-oxobutanoate: step 3/4. Its pathway is amino-acid biosynthesis; L-valine biosynthesis; L-valine from pyruvate: step 3/4. Functionally, functions in the biosynthesis of branched-chain amino acids. Catalyzes the dehydration of (2R,3R)-2,3-dihydroxy-3-methylpentanoate (2,3-dihydroxy-3-methylvalerate) into 2-oxo-3-methylpentanoate (2-oxo-3-methylvalerate) and of (2R)-2,3-dihydroxy-3-methylbutanoate (2,3-dihydroxyisovalerate) into 2-oxo-3-methylbutanoate (2-oxoisovalerate), the penultimate precursor to L-isoleucine and L-valine, respectively. The chain is Dihydroxy-acid dehydratase from Methanococcus maripaludis (strain C6 / ATCC BAA-1332).